The primary structure comprises 287 residues: ATP synthase gamma chain (287 aa).

The protein belongs to the ATPase gamma chain family. F-type ATPases have 2 components, CF(1) - the catalytic core - and CF(0) - the membrane proton channel. CF(1) has five subunits: alpha(3), beta(3), gamma(1), delta(1), epsilon(1). CF(0) has three main subunits: a, b and c.

It is found in the cell inner membrane. Functionally, produces ATP from ADP in the presence of a proton gradient across the membrane. The gamma chain is believed to be important in regulating ATPase activity and the flow of protons through the CF(0) complex. The sequence is that of ATP synthase gamma chain from Tolumonas auensis (strain DSM 9187 / NBRC 110442 / TA 4).